Here is a 121-residue protein sequence, read N- to C-terminus: Small ribosomal subunit protein uS13 (121 aa).

The segment at 94-121 is disordered; it reads GLPVRGQRTRTNARTRKGPRKGAAALKK.

This sequence belongs to the universal ribosomal protein uS13 family. Part of the 30S ribosomal subunit. Forms a loose heterodimer with protein S19. Forms two bridges to the 50S subunit in the 70S ribosome.

Functionally, located at the top of the head of the 30S subunit, it contacts several helices of the 16S rRNA. In the 70S ribosome it contacts the 23S rRNA (bridge B1a) and protein L5 of the 50S subunit (bridge B1b), connecting the 2 subunits; these bridges are implicated in subunit movement. Contacts the tRNAs in the A and P-sites. The sequence is that of Small ribosomal subunit protein uS13 from Verminephrobacter eiseniae (strain EF01-2).